A 225-amino-acid polypeptide reads, in one-letter code: GTP cyclohydrolase 1 (225 aa).

Residues 1–12 are compositionally biased toward basic and acidic residues; it reads MERSKQSHDNQA. The disordered stretch occupies residues 1 to 59; that stretch reads MERSKQSHDNQADSRPTTNESSLNGHFDGLVKKTPGMWDVKGRGTAGESSSHTGSSVVE. 2 stretches are compositionally biased toward polar residues: residues 13 to 24 and 47 to 58; these read DSRPTTNESSLN and GESSSHTGSSVV. 3 residues coordinate Zn(2+): C149, H152, and C220.

It belongs to the GTP cyclohydrolase I family. As to quaternary structure, toroid-shaped homodecamer, composed of two pentamers of five dimers.

The protein resides in the cytoplasm. The protein localises to the nucleus. The enzyme catalyses GTP + H2O = 7,8-dihydroneopterin 3'-triphosphate + formate + H(+). Its pathway is cofactor biosynthesis; 7,8-dihydroneopterin triphosphate biosynthesis; 7,8-dihydroneopterin triphosphate from GTP: step 1/1. Its activity is regulated as follows. GTP shows a positive allosteric effect, and tetrahydrobiopterin inhibits the enzyme activity. Zinc is required for catalytic activity. Inhibited by Mg(2+). Its function is as follows. May positively regulate nitric oxide synthesis in endothelial cells. May be involved in dopamine synthesis. May modify pain sensitivity and persistence. This is GTP cyclohydrolase 1 (gch1) from Oncorhynchus mykiss (Rainbow trout).